A 445-amino-acid chain; its full sequence is Putative MgpC-like protein MPN_464 (445 aa).

Positions 23 to 44 (STTVAVQKSDSSGSQGQGTTDN) are disordered. Residues 31–43 (SDSSGSQGQGTTD) are compositionally biased toward low complexity.

This sequence belongs to the MgpC family.

In Mycoplasma pneumoniae (strain ATCC 29342 / M129 / Subtype 1) (Mycoplasmoides pneumoniae), this protein is Putative MgpC-like protein MPN_464.